Here is a 426-residue protein sequence, read N- to C-terminus: Histidine--tRNA ligase (426 aa).

Belongs to the class-II aminoacyl-tRNA synthetase family. As to quaternary structure, homodimer.

Its subcellular location is the cytoplasm. It carries out the reaction tRNA(His) + L-histidine + ATP = L-histidyl-tRNA(His) + AMP + diphosphate + H(+). The sequence is that of Histidine--tRNA ligase from Geobacillus kaustophilus (strain HTA426).